The sequence spans 391 residues: MIKSALLVLEDGTQFHGRAIGAEGTAVGEVVFNTSMTGYQEILTDPSYSRQIVTLTYPHIGNVGTNASDEESSAVHAQGLVIRDLPLIASNYRNEEGLSEYLKRHNIVAIADIDTRKLTRLLREKGAQNGCIIVGELSDAALALEKAKAFPGLKGMDLAKEVTTKEMYQWLQGSWTLEGDLPAAKQPEDLPFHVVAYDYGVKRNILRMLVDRGCRLTVVPAQTPAEDVLKLNPDGIFLSNGPGDPEPCDYAITAIKRFLETDIPVFGICLGHQLLALASGAKTVKMKFGHHGGNHPVKDLDASCVMITAQNHGFAVDETSLPSNLRTTHVSLFDGSLQGLHRTDKAAFSFQGHPEASPGPHDAAPLFDHFIELIEAYRASSVSLNCSNSHK.

The segment at 1–189 (MIKSALLVLE…DLPAAKQPED (189 aa)) is CPSase. L-glutamine is bound by residues Ser47, Gly241, and Gly243. In terms of domain architecture, Glutamine amidotransferase type-1 spans 193-380 (HVVAYDYGVK…IELIEAYRAS (188 aa)). Cys269 (nucleophile) is an active-site residue. L-glutamine is bound by residues Leu270, Gln273, Asn311, Gly313, and Phe314. Residues His353 and Glu355 contribute to the active site.

It belongs to the CarA family. Composed of two chains; the small (or glutamine) chain promotes the hydrolysis of glutamine to ammonia, which is used by the large (or ammonia) chain to synthesize carbamoyl phosphate. Tetramer of heterodimers (alpha,beta)4.

It catalyses the reaction hydrogencarbonate + L-glutamine + 2 ATP + H2O = carbamoyl phosphate + L-glutamate + 2 ADP + phosphate + 2 H(+). The enzyme catalyses L-glutamine + H2O = L-glutamate + NH4(+). It participates in amino-acid biosynthesis; L-arginine biosynthesis; carbamoyl phosphate from bicarbonate: step 1/1. Its pathway is pyrimidine metabolism; UMP biosynthesis via de novo pathway; (S)-dihydroorotate from bicarbonate: step 1/3. Functionally, small subunit of the glutamine-dependent carbamoyl phosphate synthetase (CPSase). CPSase catalyzes the formation of carbamoyl phosphate from the ammonia moiety of glutamine, carbonate, and phosphate donated by ATP, constituting the first step of 2 biosynthetic pathways, one leading to arginine and/or urea and the other to pyrimidine nucleotides. The small subunit (glutamine amidotransferase) binds and cleaves glutamine to supply the large subunit with the substrate ammonia. The sequence is that of Carbamoyl phosphate synthase small chain from Yersinia pestis.